The sequence spans 269 residues: Regulating synaptic membrane exocytosis protein 4 (269 aa).

Residues 115–233 (PMGDVEIGLQ…DLTTLAVGWY (119 aa)) form the C2 domain. 2 positions are modified to phosphoserine: S254 and S257.

As to quaternary structure, binds PPFIA3. Does not bind RAB3.

The protein localises to the synapse. Its function is as follows. Regulates synaptic membrane exocytosis. This Homo sapiens (Human) protein is Regulating synaptic membrane exocytosis protein 4 (RIMS4).